We begin with the raw amino-acid sequence, 459 residues long: Glycosyl hydrolase family 109 protein (459 aa).

Residues methionine 1 to alanine 31 constitute a signal peptide (tat-type signal). Residues glutamate 64–arginine 65, aspartate 86, tryptophan 135–histidine 138, glutamate 155–valine 156, and asparagine 184 contribute to the NAD(+) site. Substrate is bound by residues tyrosine 213, arginine 232, tyrosine 244–histidine 247, and tyrosine 326. Tyrosine 244 provides a ligand contact to NAD(+).

It belongs to the Gfo/Idh/MocA family. Glycosyl hydrolase 109 subfamily. The cofactor is NAD(+). Predicted to be exported by the Tat system. The position of the signal peptide cleavage has not been experimentally proven.

Its function is as follows. Glycosidase. This is Glycosyl hydrolase family 109 protein from Shewanella baltica (strain OS185).